A 368-amino-acid chain; its full sequence is Zinc finger protein 24 (368 aa).

Lysine 22 participates in a covalent cross-link: Glycyl lysine isopeptide (Lys-Gly) (interchain with G-Cter in SUMO2). A Glycyl lysine isopeptide (Lys-Gly) (interchain with G-Cter in SUMO1); alternate cross-link involves residue lysine 27. Lysine 27 participates in a covalent cross-link: Glycyl lysine isopeptide (Lys-Gly) (interchain with G-Cter in SUMO2); alternate. The region spanning arginine 52–leucine 134 is the SCAN box domain. Residues serine 132 and serine 142 each carry the phosphoserine modification. Residues lysine 147, lysine 177, and lysine 236 each participate in a glycyl lysine isopeptide (Lys-Gly) (interchain with G-Cter in SUMO2) cross-link. Residues histidine 251–histidine 273 form a C2H2-type 1 zinc finger. Positions histidine 251–histidine 301 are necessary and sufficient for nuclear localization. Phosphoserine is present on serine 274. Residues lysine 277 and lysine 286 each participate in a glycyl lysine isopeptide (Lys-Gly) (interchain with G-Cter in SUMO2) cross-link. 3 C2H2-type zinc fingers span residues tyrosine 279–histidine 301, tyrosine 307–histidine 329, and tyrosine 335–histidine 357. Serine 292 carries the phosphoserine modification. Tyrosine 335 carries the phosphotyrosine modification. Residues lysine 361 and lysine 367 each participate in a glycyl lysine isopeptide (Lys-Gly) (interchain with G-Cter in SUMO2) cross-link.

This sequence belongs to the krueppel C2H2-type zinc-finger protein family. Sumoylated.

Its subcellular location is the nucleus. Its function is as follows. Transcription factor required for myelination of differentiated oligodendrocytes. Required for the conversion of oligodendrocytes from the premyelinating to the myelinating state. In the developing central nervous system (CNS), involved in the maintenance in the progenitor stage by promoting the cell cycle. Specifically binds to the 5'-TCAT-3' DNA sequence. Has transcription repressor activity in vitro. This chain is Zinc finger protein 24 (ZNF24), found in Pongo abelii (Sumatran orangutan).